The chain runs to 219 residues: Oxaloacetate tautomerase YcgM (219 aa).

3 residues coordinate Mg(2+): glutamate 70, glutamate 72, and aspartate 101.

It belongs to the FAH family. A divalent metal cation serves as cofactor.

It carries out the reaction oxaloacetate = enol-oxaloacetate. In terms of biological role, tautomerase that converts enol-oxaloacetate to the keto form of oxaloacetate. The polypeptide is Oxaloacetate tautomerase YcgM (Escherichia coli (strain K12)).